Here is a 474-residue protein sequence, read N- to C-terminus: 3-isopropylmalate dehydratase large subunit (474 aa).

Cysteine 352, cysteine 413, and cysteine 416 together coordinate [4Fe-4S] cluster.

This sequence belongs to the aconitase/IPM isomerase family. LeuC type 1 subfamily. In terms of assembly, heterodimer of LeuC and LeuD. It depends on [4Fe-4S] cluster as a cofactor.

The catalysed reaction is (2R,3S)-3-isopropylmalate = (2S)-2-isopropylmalate. It participates in amino-acid biosynthesis; L-leucine biosynthesis; L-leucine from 3-methyl-2-oxobutanoate: step 2/4. Catalyzes the isomerization between 2-isopropylmalate and 3-isopropylmalate, via the formation of 2-isopropylmaleate. The polypeptide is 3-isopropylmalate dehydratase large subunit (Pseudomonas syringae pv. syringae (strain B728a)).